Reading from the N-terminus, the 326-residue chain is Putative HTH-type transcriptional regulatory protein MmarC5_0898 (326 aa).

Residues leucine 128–isoleucine 183 enclose the HTH cro/C1-type domain. Residues valine 139–glutamine 158 constitute a DNA-binding region (H-T-H motif).

In Methanococcus maripaludis (strain C5 / ATCC BAA-1333), this protein is Putative HTH-type transcriptional regulatory protein MmarC5_0898.